The sequence spans 416 residues: uncharacterized protein (416 aa).

Histidine 29, aspartate 31, glutamate 144, histidine 215, and histidine 236 together coordinate Zn(2+).

This sequence belongs to the metallo-dependent hydrolases superfamily. Peptidase M19 family. The cofactor is Zn(2+).

It catalyses the reaction an L-aminoacyl-L-amino acid + H2O = 2 an L-alpha-amino acid. This is an uncharacterized protein from Schizosaccharomyces pombe (strain 972 / ATCC 24843) (Fission yeast).